Reading from the N-terminus, the 164-residue chain is Urease subunit beta (164 aa).

Composition is skewed to polar residues over residues 1–10 (MSTKTNSTKA) and 20–30 (TNRGTKSSAGY). The segment at 1 to 30 (MSTKTNSTKATSEKTDSLKTNRGTKSSAGY) is disordered.

This sequence belongs to the urease beta subunit family. As to quaternary structure, heterotrimer of UreA (gamma), UreB (beta) and UreC (alpha) subunits. Three heterotrimers associate to form the active enzyme.

It is found in the cytoplasm. It carries out the reaction urea + 2 H2O + H(+) = hydrogencarbonate + 2 NH4(+). It participates in nitrogen metabolism; urea degradation; CO(2) and NH(3) from urea (urease route): step 1/1. Functionally, expression of the urease operon increases the likelihood of bacterial survival by contributing to acid resistance in vitro and in vivo in BALB/c mice. Y.enterocolitica enters the body via an oral path and must survive the acidic stomach before being able to colonize the intestinal mucosa. The protein is Urease subunit beta of Yersinia enterocolitica.